The sequence spans 253 residues: Ubiquinone biosynthesis O-methyltransferase (253 aa).

4 residues coordinate S-adenosyl-L-methionine: R41, G72, D93, and L136.

Belongs to the methyltransferase superfamily. UbiG/COQ3 family.

The catalysed reaction is a 3-demethylubiquinol + S-adenosyl-L-methionine = a ubiquinol + S-adenosyl-L-homocysteine + H(+). It catalyses the reaction a 3-(all-trans-polyprenyl)benzene-1,2-diol + S-adenosyl-L-methionine = a 2-methoxy-6-(all-trans-polyprenyl)phenol + S-adenosyl-L-homocysteine + H(+). It functions in the pathway cofactor biosynthesis; ubiquinone biosynthesis. In terms of biological role, O-methyltransferase that catalyzes the 2 O-methylation steps in the ubiquinone biosynthetic pathway. The sequence is that of Ubiquinone biosynthesis O-methyltransferase from Azorhizobium caulinodans (strain ATCC 43989 / DSM 5975 / JCM 20966 / LMG 6465 / NBRC 14845 / NCIMB 13405 / ORS 571).